We begin with the raw amino-acid sequence, 512 residues long: Ammonium transporter 2 (512 aa).

Topologically, residues 1–47 (MSSVNSIPTATSTVYISVLPATATPSGGSGGNVLHEDLNKFYDYGNT) are extracellular. The chain crosses the membrane as a helical span at residues 48-68 (SWILACTPLCLIMVPGVAFFY). The Cytoplasmic portion of the chain corresponds to 69 to 77 (SGLARRKNT). A helical membrane pass occupies residues 78–98 (LALIMLSMLGLCVSFFQWYFW). The Extracellular segment spans residues 99-137 (GYSLAFSQTGTSGYIGNLRHFAFIRTLADYSPGSNNIPE). Residues 138–158 (LVFANFQGMFAAITVALFTGA) traverse the membrane as a helical segment. The Cytoplasmic segment spans residues 159–167 (AAERGRIGP). Residues 168–188 (MLIITFVWLTVVYCPIACWIW) form a helical membrane-spanning segment. Residues 189-201 (NPNGWAFKFGVYD) lie on the Extracellular side of the membrane. The chain crosses the membrane as a helical span at residues 202-222 (FAGGGPVEVGSGFAALAYTVC). Over 223 to 238 (LGRRSKFVEEQFRPHS) the chain is Cytoplasmic. The helical transmembrane segment at 239–259 (VLNVVLGTSLLWFGWLGFNGG) threads the bilayer. The Extracellular segment spans residues 260–267 (SAYGSNLR). Residues 268-288 (AAMAITNTNLAGAVAGLVWVI) traverse the membrane as a helical segment. The Cytoplasmic segment spans residues 289–300 (YDYIFRTRKWST). Residues 301-321 (IGFCSGVVAGLVAATPCAGFV) traverse the membrane as a helical segment. Residue Ser322 is a topological domain, extracellular. Residues 323-343 (PHASLAIGAITGLCCNWAIKL) form a helical membrane-spanning segment. Residues 344 to 354 (KSHMRIDDAMD) lie on the Cytoplasmic side of the membrane. The chain crosses the membrane as a helical span at residues 355 to 375 (IFAIHGVAGFVGTFLNGLFAV). The Extracellular segment spans residues 376 to 406 (DYIAAMDGIYVGENKIRGGWFDHHWRQLGLQ). A helical membrane pass occupies residues 407-427 (MAYICAVGAYDFVVTFIILFI). The Cytoplasmic portion of the chain corresponds to 428 to 512 (TDKIPYLQLR…TNPLELGLTI (85 aa)).

Belongs to the ammonia transporter channel (TC 1.A.11.2) family.

The protein localises to the membrane. Transporter for ammonium to use as a nitrogen source. This chain is Ammonium transporter 2 (amt2), found in Schizosaccharomyces pombe (strain 972 / ATCC 24843) (Fission yeast).